Reading from the N-terminus, the 462-residue chain is Cysteine proteinase RD21A (462 aa).

The signal sequence occupies residues 1 to 21; that stretch reads MGFLKPTMAILFLAMVAVSSA. Residues 22–136 constitute a propeptide, activation peptide; it reads VDMSIISYDE…LRYEARVGDE (115 aa). N-linked (GlcNAc...) asparagine glycosylation occurs at asparagine 90. 5 cysteine pairs are disulfide-bonded: cysteine 158-cysteine 200, cysteine 192-cysteine 233, cysteine 291-cysteine 342, cysteine 375-cysteine 387, and cysteine 381-cysteine 402. Residue cysteine 161 is part of the active site. Active-site residues include histidine 297 and asparagine 317. A propeptide spans 353–462 (removed in mature form); it reads KNGENPPNPG…FWSQGRKNIA (110 aa). Residue asparagine 414 is glycosylated (N-linked (GlcNAc...) asparagine).

Belongs to the peptidase C1 family. In terms of assembly, interacts with SERPIN1. Interacts with PRN2. Interacts with WSCP. Interacts with TZF4, TZF5 and TZF6.

It localises to the vacuole. The protein localises to the golgi apparatus. The protein resides in the cytoplasm. It is found in the stress granule. Its subcellular location is the P-body. Its activity is regulated as follows. Inhibited by the cysteine protease inhibitor E64 (L-trans-epoxysuccinyl-leucylamide-(4-guanido)-butane). Functionally, cysteine protease that plays a role in immunity, senescence, and biotic and abiotic stresses. Involved in immunity against the necrotrophic fungal pathogen Botrytis cinerea. Involved in elicitor-stimulated programmed cell death (PCD). During infection by the necrotrophic fungal pathogen Botrytis cinerea, functions as a PCD-promoting protease that is released from the ER body or vacuole to the cytoplasm. Accumulates in endoplasmic reticulum-derived bodies in epidermal cells and may participate in cell death in stressed or injured cells. Involved in water stress-induced cell death through its protease activity that is released to the cytoplasm after vacuolar collapse. Possesses protease activity in vitro and is involved in cell death in the transmitting tract and septum epidermis during flower development. Possesses peptide ligase activity. Can ligate peptides to unmodified N-termini of acceptor proteins. Probably ligates through a thioester intermediate. The chain is Cysteine proteinase RD21A from Arabidopsis thaliana (Mouse-ear cress).